A 194-amino-acid polypeptide reads, in one-letter code: Probable nicotinate-nucleotide adenylyltransferase (194 aa).

The protein belongs to the NadD family.

The enzyme catalyses nicotinate beta-D-ribonucleotide + ATP + H(+) = deamido-NAD(+) + diphosphate. It participates in cofactor biosynthesis; NAD(+) biosynthesis; deamido-NAD(+) from nicotinate D-ribonucleotide: step 1/1. Functionally, catalyzes the reversible adenylation of nicotinate mononucleotide (NaMN) to nicotinic acid adenine dinucleotide (NaAD). The polypeptide is Probable nicotinate-nucleotide adenylyltransferase (Christiangramia forsetii (strain DSM 17595 / CGMCC 1.15422 / KT0803) (Gramella forsetii)).